The chain runs to 451 residues: UDP-N-acetylmuramate--L-alanine ligase (451 aa).

110 to 116 (GTHGKTT) contributes to the ATP binding site.

This sequence belongs to the MurCDEF family.

The protein localises to the cytoplasm. The catalysed reaction is UDP-N-acetyl-alpha-D-muramate + L-alanine + ATP = UDP-N-acetyl-alpha-D-muramoyl-L-alanine + ADP + phosphate + H(+). Its pathway is cell wall biogenesis; peptidoglycan biosynthesis. In terms of biological role, cell wall formation. This is UDP-N-acetylmuramate--L-alanine ligase from Francisella tularensis subsp. tularensis (strain WY96-3418).